The primary structure comprises 553 residues: Solute carrier family 45 member 3 (553 aa).

11 helical membrane passes run Leu19 to Val39, Phe52 to Gly72, Phe88 to Trp108, Leu120 to Phe140, Phe161 to Ile181, Cys198 to Thr218, Phe275 to Phe295, Met323 to Asp343, Ser353 to His373, Ala382 to Leu402, and Ala522 to Val542.

This sequence belongs to the glycoside-pentoside-hexuronide (GPH) cation symporter transporter (TC 2.A.2) family. Expressed in the epididymis. Primarily expressed in the prostate, but also in other tissues.

The protein localises to the membrane. It catalyses the reaction sucrose(out) + H(+)(out) = sucrose(in) + H(+)(in). Functionally, proton-associated sucrose transporter. May be able to transport also glucose and fructose. This chain is Solute carrier family 45 member 3 (Slc45a3), found in Mus musculus (Mouse).